A 359-amino-acid polypeptide reads, in one-letter code: Putative B3 domain-containing protein At3g24850 (359 aa).

2 disordered regions span residues 92-111 and 159-192; these read DSEI…LQNS and EKME…KRTG. Residues 100–111 are compositionally biased toward polar residues; that stretch reads TSDSQMKTLQNS. A DNA-binding region (TF-B3) is located at residues 250-351; that stretch reads FNNLLQNDFL…VLCFAMEQSS (102 aa).

It is found in the nucleus. This is Putative B3 domain-containing protein At3g24850 from Arabidopsis thaliana (Mouse-ear cress).